The primary structure comprises 404 residues: cAMP-dependent protein kinase regulatory subunit (404 aa).

A dimerization and phosphorylation region spans residues 14-144 (LTDHELLRIP…RLKTAIAGNF (131 aa)). Serine 105 is subject to Phosphoserine. 3',5'-cyclic AMP is bound by residues 145 to 276 (LFSH…EKFP), glutamate 223, arginine 232, 277 to 398 (CCRH…GVEE), glutamate 344, and arginine 353.

This sequence belongs to the cAMP-dependent kinase regulatory chain family. As to quaternary structure, tetramer, composed of 2 regulatory (R) and 2 catalytic (C) subunits. In the presence of cAMP it dissociates into 2 active monomeric C subunits and an R dimer.

In terms of biological role, cAMP-dependent protein kinase PKA regulatory subunit. This is cAMP-dependent protein kinase regulatory subunit (PKAR) from Colletotrichum trifolii.